We begin with the raw amino-acid sequence, 216 residues long: DNA-directed RNA polymerase subunit alpha (216 aa).

It belongs to the RNA polymerase alpha chain family. As to quaternary structure, in plastids the minimal PEP RNA polymerase catalytic core is composed of four subunits: alpha, beta, beta', and beta''. When a (nuclear-encoded) sigma factor is associated with the core the holoenzyme is formed, which can initiate transcription.

The protein localises to the plastid. It is found in the chloroplast. The catalysed reaction is RNA(n) + a ribonucleoside 5'-triphosphate = RNA(n+1) + diphosphate. DNA-dependent RNA polymerase catalyzes the transcription of DNA into RNA using the four ribonucleoside triphosphates as substrates. The sequence is that of DNA-directed RNA polymerase subunit alpha (rpoA) from Euglena granulata.